The following is a 121-amino-acid chain: Ribosome-binding factor A (121 aa).

Belongs to the RbfA family. As to quaternary structure, monomer. Binds 30S ribosomal subunits, but not 50S ribosomal subunits or 70S ribosomes.

It is found in the cytoplasm. Its function is as follows. One of several proteins that assist in the late maturation steps of the functional core of the 30S ribosomal subunit. Associates with free 30S ribosomal subunits (but not with 30S subunits that are part of 70S ribosomes or polysomes). Required for efficient processing of 16S rRNA. May interact with the 5'-terminal helix region of 16S rRNA. This is Ribosome-binding factor A from Lactobacillus acidophilus (strain ATCC 700396 / NCK56 / N2 / NCFM).